Here is a 474-residue protein sequence, read N- to C-terminus: Microtubule protein alp7 (474 aa).

The span at 1–20 (MSDIVSSSTDYSRRSPSSSS) shows a compositional bias: low complexity. 3 disordered regions span residues 1-79 (MSDI…DTLN), 93-114 (KSFD…LSQH), and 164-223 (SLQT…NSTQ). At Ser17 the chain carries Phosphoserine. The span at 25–36 (ETDHTGFHEKRQ) shows a compositional bias: basic and acidic residues. Residues 66-76 (SKPNPQLNLKD) show a composition bias toward polar residues. 2 stretches are compositionally biased toward polar residues: residues 177–189 (SNGS…NTAP) and 201–223 (RNSA…NSTQ). Coiled coils occupy residues 219 to 273 (INST…QLRS) and 367 to 471 (KISN…LNLE).

As to quaternary structure, interacts with alp14.

The protein resides in the nucleus. It is found in the cytoplasm. It localises to the cytoskeleton. Its subcellular location is the spindle. The protein localises to the chromosome. The protein resides in the centromere. It is found in the kinetochore. Required for bipolar spindle formation and proper chromosome segregation. Has an indirect role in connecting the kinetochores and the plus end of pole to chromosome microtubules by targeting alp14 to the spindle pole body. Involved in the emergence of large microtubule organizing centers (MTOC) in interphase cells. Attaches to the minus ends of microtubules and associates with the sites of microtubule attachment on the nuclear envelope. This leads to the stabilization of the microtubule bundles. The polypeptide is Microtubule protein alp7 (alp7) (Schizosaccharomyces pombe (strain 972 / ATCC 24843) (Fission yeast)).